The primary structure comprises 262 residues: MQVDLLSSAQSAHALHLFHQHSPLVHCMTNDVVQTFTANTLLALGASPAMVIETEEASQFAAIASALLINVGTLTQPRVQAMSAAVEQATRSQTPWTLDPVAVGALDYRRRFCVELLSHKPTAIRGNASEIMALAGVANGGRGVDTTDAAANAIPAAQTLARETGAIVVVTGEVDYVTDGHRIVGIHGGNPLMTKVVGTGCALSAVVAACCALPGDTLENIASACHWMKQAGERAVARSEGPGSFVPHFLDALWQLAQEVQA.

Residue Met-50 coordinates substrate. Arg-125 and Thr-171 together coordinate ATP. Residue Gly-198 participates in substrate binding.

Belongs to the Thz kinase family. The cofactor is Mg(2+).

The catalysed reaction is 5-(2-hydroxyethyl)-4-methylthiazole + ATP = 4-methyl-5-(2-phosphooxyethyl)-thiazole + ADP + H(+). Its pathway is cofactor biosynthesis; thiamine diphosphate biosynthesis; 4-methyl-5-(2-phosphoethyl)-thiazole from 5-(2-hydroxyethyl)-4-methylthiazole: step 1/1. Functionally, catalyzes the phosphorylation of the hydroxyl group of 4-methyl-5-beta-hydroxyethylthiazole (THZ). The sequence is that of Hydroxyethylthiazole kinase from Escherichia coli O81 (strain ED1a).